The sequence spans 377 residues: 5-hydroxytryptamine receptor 1D (377 aa).

The interval 1 to 23 (MSPLNQSAEGLPQEASNRSLNAT) is disordered. Topologically, residues 1–38 (MSPLNQSAEGLPQEASNRSLNATETSEAWDPRTLQALK) are extracellular. Residues Asn-5, Asn-17, and Asn-21 are each glycosylated (N-linked (GlcNAc...) asparagine). The chain crosses the membrane as a helical span at residues 39-64 (ISLAVVLSVITLATVLSNAFVLTTIL). At 65 to 75 (LTRKLHTPANY) the chain is on the cytoplasmic side. Residues 76–97 (LIGSLATTDLLVSILVMPISIA) form a helical membrane-spanning segment. Residues 98-109 (YTITHTWNFGQI) lie on the Extracellular side of the membrane. A helical membrane pass occupies residues 110 to 134 (LCDIWLSSDITCCTASILHLCVIAL). Cys-111 and Cys-188 are joined by a disulfide. Serotonin-binding residues include Asp-118 and Cys-122. The DRY motif; important for ligand-induced conformation changes signature appears at 135-137 (DRY). Residues 135 to 154 (DRYWAITDALEYSKRRTAGH) are Cytoplasmic-facing. Residues 155 to 176 (AATMIAIVWAISICISIPPLFW) form a helical membrane-spanning segment. Topologically, residues 177–194 (RQAKAQEEMSDCLVNTSQ) are extracellular. The helical transmembrane segment at 195–218 (ISYTIYSTCGAFYIPSVLLIILYG) threads the bilayer. Residues 219 to 300 (RIYRAARNRI…ISAARERKAT (82 aa)) lie on the Cytoplasmic side of the membrane. Residues 301-326 (KILGIILGAFIICWLPFFVVSLVLPI) traverse the membrane as a helical segment. Residue Ser-321 participates in serotonin binding. At 327-335 (CRDSCWIHP) the chain is on the extracellular side. The chain crosses the membrane as a helical span at residues 336–359 (ALFDFFTWLGYLNSLINPIIYTVF). Positions 352 to 356 (NPIIY) match the NPxxY motif; important for ligand-induced conformation changes and signaling motif. Over 360 to 377 (NEEFRQAFQKIVPFRKAS) the chain is Cytoplasmic.

The protein belongs to the G-protein coupled receptor 1 family. In terms of assembly, homodimer. Heterodimer with HTR1B. As to expression, detected in brain neocortex and caudate nucleus (at protein level).

It localises to the cell membrane. In terms of biological role, G-protein coupled receptor for 5-hydroxytryptamine (serotonin). Also functions as a receptor for ergot alkaloid derivatives, various anxiolytic and antidepressant drugs and other psychoactive substances. Ligand binding causes a conformation change that triggers signaling via guanine nucleotide-binding proteins (G proteins) and modulates the activity of downstream effectors, such as adenylate cyclase. HTR1D is coupled to G(i)/G(o) G alpha proteins and mediates inhibitory neurotransmission by inhibiting adenylate cyclase activity. Regulates the release of 5-hydroxytryptamine in the brain, and thereby affects neural activity. May also play a role in regulating the release of other neurotransmitters. May play a role in vasoconstriction. The polypeptide is 5-hydroxytryptamine receptor 1D (Homo sapiens (Human)).